The chain runs to 579 residues: GPI alpha-1,2-mannosyltransferase 4 (579 aa).

8 consecutive transmembrane segments (helical) span residues 131 to 151 (LLLT…APPM), 156 to 173 (WNAL…VFYT), 180 to 200 (IEGL…TWGP), 216 to 236 (LGGI…FAVV), 258 to 278 (ALVL…TDSW), 369 to 389 (YLLL…HQEA), 391 to 411 (FLIP…QPVP), and 416 to 436 (VVLF…GGLV).

It belongs to the glycosyltransferase 22 family. PIGZ subfamily. Widely expressed at low level, with highest level in brain and colon.

It is found in the endoplasmic reticulum membrane. It functions in the pathway glycolipid biosynthesis; glycosylphosphatidylinositol-anchor biosynthesis. Alpha-1,2-mannosyltransferase that catalyzes the transfer of the fourth mannose, via an alpha-1,2 bond, from a dolichol-phosphate-mannose (Dol-P-Man) to an alpha-D-Man-(1-&gt;2)-alpha-D-Man-(1-&gt;6)-2-PEtn-alpha-D-Man-(1-&gt;4)-alpha-D-GlcN-(1-&gt;6)-(1-radyl,2-acyl-sn-glycero-3-phospho)-2-acyl-inositol (also termed H6) intermediate and participates in the twelfth step of the glycosylphosphatidylinositol-anchor biosynthesis. The presence of a fourth mannose in GPI is facultative, suggesting that it only exists in some tissues. This Homo sapiens (Human) protein is GPI alpha-1,2-mannosyltransferase 4.